The sequence spans 63 residues: DNA gyrase inhibitor YacG (63 aa).

Residues Cys-9, Cys-12, Cys-28, and Cys-32 each coordinate Zn(2+).

Belongs to the DNA gyrase inhibitor YacG family. Interacts with GyrB. It depends on Zn(2+) as a cofactor.

Functionally, inhibits all the catalytic activities of DNA gyrase by preventing its interaction with DNA. Acts by binding directly to the C-terminal domain of GyrB, which probably disrupts DNA binding by the gyrase. The polypeptide is DNA gyrase inhibitor YacG (Salmonella choleraesuis (strain SC-B67)).